The chain runs to 85 residues: Beta-insect depressant toxin Lqh-dprIT3d (85 aa).

Positions 1-21 (MKLLLLLTISASMLIEGLVNA) are cleaved as a signal peptide. Residues 22 to 82 (DGYIRGGDGC…EWDYETNTCG (61 aa)) enclose the LCN-type CS-alpha/beta domain. 4 cysteine pairs are disulfide-bonded: cysteine 31–cysteine 81, cysteine 35–cysteine 56, cysteine 42–cysteine 63, and cysteine 46–cysteine 65. At glycine 82 the chain carries Glycine amide.

The protein belongs to the long (4 C-C) scorpion toxin superfamily. Sodium channel inhibitor family. Beta subfamily. Expressed by the venom gland.

It localises to the secreted. Depressant insect beta-toxins cause a transient contraction paralysis followed by a slow flaccid paralysis. They bind voltage-independently at site-4 of sodium channels (Nav) and block action potentials, primarily by depolarizing the axonal membrane and suppressing the sodium current. This depressant toxin is active only on insects. It is found in a relatively small amount in the venom, and its activity on insects is 10-fold higher compared to other known depressant toxins. This is Beta-insect depressant toxin Lqh-dprIT3d from Leiurus hebraeus (Hebrew deathstalker scorpion).